Reading from the N-terminus, the 513-residue chain is ATP synthase subunit alpha 2 (513 aa).

An ATP-binding site is contributed by 169-176; sequence GDRQTGKT.

Belongs to the ATPase alpha/beta chains family. F-type ATPases have 2 components, CF(1) - the catalytic core - and CF(0) - the membrane proton channel. CF(1) has five subunits: alpha(3), beta(3), gamma(1), delta(1), epsilon(1). CF(0) has three main subunits: a(1), b(2) and c(9-12). The alpha and beta chains form an alternating ring which encloses part of the gamma chain. CF(1) is attached to CF(0) by a central stalk formed by the gamma and epsilon chains, while a peripheral stalk is formed by the delta and b chains.

It localises to the cell inner membrane. It catalyses the reaction ATP + H2O + 4 H(+)(in) = ADP + phosphate + 5 H(+)(out). Produces ATP from ADP in the presence of a proton gradient across the membrane. The alpha chain is a regulatory subunit. This is ATP synthase subunit alpha 2 from Pseudoalteromonas atlantica (strain T6c / ATCC BAA-1087).